The primary structure comprises 476 residues: Tubulointerstitial nephritis antigen (476 aa).

An N-linked (GlcNAc...) asparagine glycan is attached at asparagine 38. In terms of domain architecture, SMB spans arginine 59–glycine 107. 2 disulfides stabilise this stretch: cysteine 63–cysteine 83 and cysteine 87–cysteine 94. N-linked (GlcNAc...) asparagine glycosylation is found at asparagine 175, asparagine 314, asparagine 360, and asparagine 455.

This sequence belongs to the peptidase C1 family.

Its subcellular location is the secreted. It is found in the extracellular space. It localises to the extracellular matrix. The protein localises to the basement membrane. In terms of biological role, mediates adhesion of proximal tubule epithelial cells via integrins alpha3-beta1 and alphaV-beta3. This is a non catalytic peptidase C1 family protein. The sequence is that of Tubulointerstitial nephritis antigen (TINAG) from Bos taurus (Bovine).